A 395-amino-acid chain; its full sequence is Ribosomal RNA large subunit methyltransferase I (395 aa).

Positions 2-79 (SSRVTLHPGR…QNESVDNGFF (78 aa)) constitute a PUA domain.

Belongs to the methyltransferase superfamily. RlmI family.

The protein resides in the cytoplasm. The catalysed reaction is cytidine(1962) in 23S rRNA + S-adenosyl-L-methionine = 5-methylcytidine(1962) in 23S rRNA + S-adenosyl-L-homocysteine + H(+). In terms of biological role, specifically methylates the cytosine at position 1962 (m5C1962) of 23S rRNA. The polypeptide is Ribosomal RNA large subunit methyltransferase I (Pseudoalteromonas atlantica (strain T6c / ATCC BAA-1087)).